The sequence spans 1403 residues: Envelopment polyprotein (1403 aa).

The first 17 residues, 1–17 (MLLNIVLISNLACLAFA), serve as a signal peptide directing secretion. The Lumenal segment spans residues 18–209 (LPLKEGTRGS…ELMIESFCTN (192 aa)). Asn40 carries an N-linked (GlcNAc...) asparagine; by host glycan. The chain crosses the membrane as a helical span at residues 210-230 (LELILLVTFILVGSVMMMILT). Residues 231–314 (KTYIVYVFIP…PKTRKLCKSK (84 aa)) are Cytoplasmic-facing. Residues 315–335 (ISNIVLCVITSLIFFSFITPI) form a helical membrane-spanning segment. Residues 336 to 361 (SSQCIDIEKLPDEYITCKRELANIKS) lie on the Lumenal side of the membrane. Residues 362 to 382 (LTIDDTYSFIYSCTCIIVLIL) traverse the membrane as a helical segment. Residues 383–448 (LKKAAKYILY…FKFESSYNRT (66 aa)) lie on the Cytoplasmic side of the membrane. Residues 449 to 469 (GLIIFMLLLVPTIVMTQETSI) form a helical membrane-spanning segment. The Lumenal portion of the chain corresponds to 470–1361 (NCKNIQSTQL…GNLSFYWRLT (892 aa)). A disulfide bond links Cys471 and Cys487. A glycan (N-linked (GlcNAc...) asparagine; by host) is linked at Asn493. 3 cysteine pairs are disulfide-bonded: Cys523/Cys550, Cys580/Cys589, and Cys591/Cys598. N-linked (GlcNAc...) asparagine; by host glycosylation is found at Asn686 and Asn1353. A helical membrane pass occupies residues 1362–1382 (IYIIISLIMLILFLYILIPLC). The Cytoplasmic segment spans residues 1383–1403 (KRLKGLLEYNERIYQMENKFK).

The protein belongs to the nairovirus envelope glycoprotein family. In terms of assembly, heterodimer with glycoprotein C; in prefusion state. Heterodimer with glycoprotein N; in prefusion state. Homotrimeric; in postfusion state. Specific enzymatic cleavage by host MBTPS1/S1P/SKI-1 endopeptidase yield glycoprotein N. Specific enzymatic cleavages by host furin-like protease and MBTPS1/S1P endopeptidase yield GP38. Post-translationally, glycosylated.

Its subcellular location is the host endoplasmic reticulum membrane. The protein localises to the virion membrane. It localises to the host Golgi apparatus membrane. Glycoprotein C and glycoprotein N interact with each other and are present at the surface of the virion. Glycoprotein N probably locks the Gn-Gc complex in a prefusion state. Glycoprotein N and glycoprotein C are able to attach the virion to host cell receptors. This attachment induces virion internalization predominantly through clathrin-dependent endocytosis. In terms of biological role, glycoprotein C and glycoprotein N interact with each other and are present at the surface of the virion. The spikes at the surface of the virion are formed by an N-terminal extension of glycoprotein C. Glycoprotein N and glycoprotein C are able to attach the virion to host cell receptors. This attachment induces virion internalization predominantly through clathrin-dependent endocytosis. Class II fusion protein that promotes fusion of viral membrane with host endosomal membrane after endocytosis of the virion. Exposure to potassium is necessary for the conformational change leading to fusion. The sequence is that of Envelopment polyprotein (GP) from Bos taurus (Bovine).